Consider the following 251-residue polypeptide: uncharacterized protein (251 aa).

A signal peptide spans 1–18 (MRILIILSIILCSLFARA).

It belongs to the MlaA family.

This is an uncharacterized protein from Rickettsia felis (strain ATCC VR-1525 / URRWXCal2) (Rickettsia azadi).